Consider the following 74-residue polypeptide: UPF0435 protein BCB4264_A0471 (74 aa).

The protein belongs to the UPF0435 family.

This is UPF0435 protein BCB4264_A0471 from Bacillus cereus (strain B4264).